A 445-amino-acid polypeptide reads, in one-letter code: Phosphoglucosamine mutase (445 aa).

The active-site Phosphoserine intermediate is the Ser102. Mg(2+) contacts are provided by Ser102, Asp240, Asp242, and Asp244. Residue Ser102 is modified to Phosphoserine.

Belongs to the phosphohexose mutase family. Mg(2+) is required as a cofactor. Post-translationally, activated by phosphorylation.

It carries out the reaction alpha-D-glucosamine 1-phosphate = D-glucosamine 6-phosphate. Functionally, catalyzes the conversion of glucosamine-6-phosphate to glucosamine-1-phosphate. The protein is Phosphoglucosamine mutase of Mycolicibacterium vanbaalenii (strain DSM 7251 / JCM 13017 / BCRC 16820 / KCTC 9966 / NRRL B-24157 / PYR-1) (Mycobacterium vanbaalenii).